The sequence spans 299 residues: Endonuclease G, mitochondrial (299 aa).

Residues 1–48 constitute a mitochondrion transit peptide; sequence MQLLRAGLTLALGAGLGAAAESWWRQRADARATPGLLSRLPVLPVAAA. The residue at position 130 (Thr-130) is a Phosphothreonine. The active-site Proton acceptor is the His-143. Mg(2+) is bound at residue Asn-174. The tract at residues 288–298 is essential for deoxyribonuclease activity; sequence AGSLKAITAGS. Ser-290 is subject to Phosphoserine.

It belongs to the DNA/RNA non-specific endonuclease family. As to quaternary structure, homodimer; disulfide-linked. Homodimerization is essential for its activity. Interacts with YWHAG. It depends on Mg(2+) as a cofactor. GSK3-beta-mediated dual phosphorylations at Thr-130 and Ser-290 is necessary for its interaction with YWHAG and the induction of autophagy.

It is found in the mitochondrion. Endonuclease that preferentially catalyzes the cleavage of double-stranded 5-hydroxymethylcytosine (5hmC)-modified DNA. The 5hmC-modified nucleotide does not increase the binding affinity, but instead increases the efficiency of cutting and specifies the site of cleavage for the modified DNAs. Shows significantly higher affinity for four- stranded Holliday junction over duplex and single-stranded DNAs. Promotes conservative recombination when the DNA is 5hmC-modified. Promotes autophagy through the suppression of mTOR by its phosphorylation-mediated interaction with YWHAG and its endonuclease activity-mediated DNA damage response. GSK3-beta mediated phosphorylation of ENDOG enhances its interaction with YWHAG, leading to the release of TSC2 and PIK3C3 from YWHAG resulting in mTOR pathway suppression and autophagy initiation. Promotes cleavage of mtDNA in response to oxidative and nitrosative stress, in turn inducing compensatory mtDNA replication. The sequence is that of Endonuclease G, mitochondrial (ENDOG) from Bos taurus (Bovine).